We begin with the raw amino-acid sequence, 160 residues long: Endoribonuclease YbeY (160 aa).

The Zn(2+) site is built by histidine 121, histidine 125, and histidine 131.

It belongs to the endoribonuclease YbeY family. Zn(2+) serves as cofactor.

It is found in the cytoplasm. Its function is as follows. Single strand-specific metallo-endoribonuclease involved in late-stage 70S ribosome quality control and in maturation of the 3' terminus of the 16S rRNA. The sequence is that of Endoribonuclease YbeY from Syntrophus aciditrophicus (strain SB).